The following is a 360-amino-acid chain: MHLTRLNIERVRNLKTVALHGLQPFNVFYGANGSGKTSILEAIHLLATGRSFRTHIPKNYIQYEADDAIVFAQSATEKIGMQKLASGEQLMKVNGDTVATQGQLAKLLPLQHIDPQSTEIIDHGAKPRRQLLDWLMFHVEPEFYFAWQYYSRALKQRNTLLKTRRNLSLADLEPWNKMLSNYGEILHSQRLSIVEQWNVYFQNDLSQLLPDLEIELEYSPGFHTEQGLMQDLLNQHQKDIERRYTEYGPHRADLRLKTLFGHADDVLSRGQKKLLIIALKLSQIAMLHASNKETVVLLDDLTAELDLTAQQRLIERLSQLGSQVFMTTLDRASVKKHLHDLSISYQLFSVESGQVSLAAP.

30–37 lines the ATP pocket; it reads GANGSGKT.

This sequence belongs to the RecF family.

It is found in the cytoplasm. Its function is as follows. The RecF protein is involved in DNA metabolism; it is required for DNA replication and normal SOS inducibility. RecF binds preferentially to single-stranded, linear DNA. It also seems to bind ATP. This is DNA replication and repair protein RecF from Acinetobacter baumannii (strain SDF).